Reading from the N-terminus, the 777-residue chain is Aconitate hydratase, mitochondrial (777 aa).

Residues Q96 and 189–191 each bind substrate; that span reads DSH. [4Fe-4S] cluster is bound by residues C383, C446, and C449. Residues R472, R477, R605, and 668–669 each bind substrate; that span reads SR.

It belongs to the aconitase/IPM isomerase family. Monomer. The cofactor is [4Fe-4S] cluster.

It localises to the mitochondrion. It carries out the reaction citrate = D-threo-isocitrate. Its pathway is carbohydrate metabolism; tricarboxylic acid cycle; isocitrate from oxaloacetate: step 2/2. In terms of biological role, catalyzes the isomerization of citrate to isocitrate via cis-aconitate, a step in the citric acid cycle. In Candida albicans (strain SC5314 / ATCC MYA-2876) (Yeast), this protein is Aconitate hydratase, mitochondrial (ACO1).